The sequence spans 154 residues: Urease accessory protein UreE (154 aa).

The protein belongs to the UreE family.

It localises to the cytoplasm. Involved in urease metallocenter assembly. Binds nickel. Probably functions as a nickel donor during metallocenter assembly. The chain is Urease accessory protein UreE from Rhizobium meliloti (strain 1021) (Ensifer meliloti).